We begin with the raw amino-acid sequence, 308 residues long: MAALCLLLLLSLAEAIDLRVPELPVIGLLDKDVILPCWFTPSEGFTPKNLSVFWKLPNQQQDYGFVLGEDLQENQSPQYKDRISLFHEELSKGNMSVLLQQVRLTDEGIYTCFVNVQNSSSASVSLQVGAPFTKPTLHLEPSEALKPGDQVTVTCHTYDGYPEANILWQNGEGQNMTENITTSQVANEKGLFHVQSSLSVILETSDTYTCLVFNPVLQDVTHASLTVTGQHLSFPPLVLWVTVGLSICLLCLLVALACVCRKHLKQTCEEEQENAGNEEHEENGELKTAMQPLKVTSPGEDDDAECLE.

The N-terminal stretch at 1 to 15 (MAALCLLLLLSLAEA) is a signal peptide. Over 16-236 (IDLRVPELPV…VTGQHLSFPP (221 aa)) the chain is Extracellular. The Ig-like V-type domain occupies 21 to 125 (PELPVIGLLD…VQNSSSASVS (105 aa)). 2 disulfides stabilise this stretch: Cys-37-Cys-112 and Cys-155-Cys-210. Residues 135–228 (PTLHLEPSEA…DVTHASLTVT (94 aa)) enclose the Ig-like C2-type domain. Residues 237–257 (LVLWVTVGLSICLLCLLVALA) form a helical membrane-spanning segment. Residues 258-308 (CVCRKHLKQTCEEEQENAGNEEHEENGELKTAMQPLKVTSPGEDDDAECLE) lie on the Cytoplasmic side of the membrane. The tract at residues 270–308 (EEQENAGNEEHEENGELKTAMQPLKVTSPGEDDDAECLE) is disordered. Residues 299 to 308 (GEDDDAECLE) are compositionally biased toward acidic residues.

This sequence belongs to the immunoglobulin superfamily. BTN/MOG family.

It localises to the membrane. Its function is as follows. Modulates immune responses. The chain is CD276 antigen homolog (cd276) from Xenopus laevis (African clawed frog).